Here is a 243-residue protein sequence, read N- to C-terminus: Leucyl/phenylalanyl-tRNA--protein transferase (243 aa).

The protein belongs to the L/F-transferase family.

The protein localises to the cytoplasm. It carries out the reaction N-terminal L-lysyl-[protein] + L-leucyl-tRNA(Leu) = N-terminal L-leucyl-L-lysyl-[protein] + tRNA(Leu) + H(+). The catalysed reaction is N-terminal L-arginyl-[protein] + L-leucyl-tRNA(Leu) = N-terminal L-leucyl-L-arginyl-[protein] + tRNA(Leu) + H(+). It catalyses the reaction L-phenylalanyl-tRNA(Phe) + an N-terminal L-alpha-aminoacyl-[protein] = an N-terminal L-phenylalanyl-L-alpha-aminoacyl-[protein] + tRNA(Phe). Functions in the N-end rule pathway of protein degradation where it conjugates Leu, Phe and, less efficiently, Met from aminoacyl-tRNAs to the N-termini of proteins containing an N-terminal arginine or lysine. This Vibrio cholerae serotype O1 (strain ATCC 39315 / El Tor Inaba N16961) protein is Leucyl/phenylalanyl-tRNA--protein transferase.